The chain runs to 181 residues: TATA-box-binding protein (181 aa).

2 tandem repeats follow at residues 8–84 (IENI…VDLM) and 99–175 (IQNI…YDRL).

It belongs to the TBP family.

Functionally, general factor that plays a role in the activation of archaeal genes transcribed by RNA polymerase. Binds specifically to the TATA box promoter element which lies close to the position of transcription initiation. This is TATA-box-binding protein from Methanobrevibacter smithii (strain ATCC 35061 / DSM 861 / OCM 144 / PS).